A 122-amino-acid chain; its full sequence is uncharacterized protein (122 aa).

A run of 2 helical transmembrane segments spans residues 34–54 (IIFL…GVLV) and 91–111 (FVLA…FVSF).

It localises to the cell membrane. This is an uncharacterized protein from Mycoplasma pneumoniae (strain ATCC 29342 / M129 / Subtype 1) (Mycoplasmoides pneumoniae).